Consider the following 87-residue polypeptide: Cell division topological specificity factor (87 aa).

It belongs to the MinE family.

Functionally, prevents the cell division inhibition by proteins MinC and MinD at internal division sites while permitting inhibition at polar sites. This ensures cell division at the proper site by restricting the formation of a division septum at the midpoint of the long axis of the cell. This chain is Cell division topological specificity factor, found in Herpetosiphon aurantiacus (strain ATCC 23779 / DSM 785 / 114-95).